The chain runs to 202 residues: Protein phosphatase 1 regulatory subunit 1B (202 aa).

Methionine 1 carries the N-acetylmethionine modification. The disordered stretch occupies residues 1-202 (MDPKDRKKIQ…QRPAHPEPGT (202 aa)). Residue threonine 34 is modified to Phosphothreonine; by PKA. The segment covering 41–63 (LSEHSSPEEEASPHQRASGEGHH) has biased composition (basic and acidic residues). Serine 45 and serine 46 each carry phosphoserine. Threonine 75 carries the phosphothreonine; by CDK5 modification. Residues 89–100 (HLQSISNLGENQ) are compositionally biased toward polar residues. At serine 102 the chain carries Phosphoserine. Residues 109-118 (GELRELGYPR) show a composition bias toward basic and acidic residues. Residues 119–136 (EEEEEEEEEDEEEEEDSQ) show a composition bias toward acidic residues. A Phosphoserine modification is found at serine 135. The segment covering 191 to 202 (EPQRPAHPEPGT) has biased composition (basic and acidic residues).

It belongs to the protein phosphatase inhibitor 1 family. Post-translationally, dopamine- and cyclic AMP-regulated neuronal phosphoprotein. Phosphorylation of Thr-34 is required for activity.

The protein localises to the cytoplasm. In terms of biological role, inhibitor of protein-phosphatase 1. The polypeptide is Protein phosphatase 1 regulatory subunit 1B (PPP1R1B) (Bos taurus (Bovine)).